The primary structure comprises 398 residues: 1-deoxy-D-xylulose 5-phosphate reductoisomerase (398 aa).

Residues T21, G22, S23, I24, G47, N50, and N127 each coordinate NADPH. Residue K128 participates in 1-deoxy-D-xylulose 5-phosphate binding. Position 129 (E129) interacts with NADPH. D151 is a Mn(2+) binding site. Residues S152, E153, S177, and H200 each coordinate 1-deoxy-D-xylulose 5-phosphate. E153 contributes to the Mn(2+) binding site. G206 serves as a coordination point for NADPH. 1-deoxy-D-xylulose 5-phosphate is bound by residues S213, N218, K219, and E222. E222 lines the Mn(2+) pocket.

The protein belongs to the DXR family. Requires Mg(2+) as cofactor. Mn(2+) is required as a cofactor.

It carries out the reaction 2-C-methyl-D-erythritol 4-phosphate + NADP(+) = 1-deoxy-D-xylulose 5-phosphate + NADPH + H(+). Its pathway is isoprenoid biosynthesis; isopentenyl diphosphate biosynthesis via DXP pathway; isopentenyl diphosphate from 1-deoxy-D-xylulose 5-phosphate: step 1/6. Its function is as follows. Catalyzes the NADPH-dependent rearrangement and reduction of 1-deoxy-D-xylulose-5-phosphate (DXP) to 2-C-methyl-D-erythritol 4-phosphate (MEP). The protein is 1-deoxy-D-xylulose 5-phosphate reductoisomerase of Mycolicibacterium smegmatis (strain ATCC 700084 / mc(2)155) (Mycobacterium smegmatis).